The following is a 778-amino-acid chain: DNA topoisomerase 1 (778 aa).

A disordered region spans residues Met1 to Lys141. Residues Lys17–Thr26 are compositionally biased toward low complexity. Composition is skewed to basic and acidic residues over residues Val71–Ser83 and Glu100–Thr121. Over residues Gln122 to Ser131 the composition is skewed to polar residues. 3 interaction with DNA regions span residues Lys367–Tyr368, Arg430–Lys435, and Thr522–Lys524. Residues Asn374 to Phe778 form the Topo IB-type catalytic domain. Catalysis depends on Tyr736, which acts as the O-(3'-phospho-DNA)-tyrosine intermediate.

The protein belongs to the type IB topoisomerase family.

The catalysed reaction is ATP-independent breakage of single-stranded DNA, followed by passage and rejoining.. Functionally, releases the supercoiling and torsional tension of DNA introduced during the DNA replication and transcription by transiently cleaving and rejoining one strand of the DNA duplex. Introduces a single-strand break via transesterification at a target site in duplex DNA. The scissile phosphodiester is attacked by the catalytic tyrosine of the enzyme, resulting in the formation of a DNA-(3'-phosphotyrosyl)-enzyme intermediate and the expulsion of a 5'-OH DNA strand. The free DNA strand then rotates around the intact phosphodiester bond on the opposing strand, thus removing DNA supercoils. Finally, in the religation step, the DNA 5'-OH attacks the covalent intermediate to expel the active-site tyrosine and restore the DNA phosphodiester backbone. This is DNA topoisomerase 1 (TOP1) from Candida albicans (Yeast).